We begin with the raw amino-acid sequence, 87 residues long: Acyl-CoA-binding protein (87 aa).

An ACB domain is found at 2 to 87 (VSQLFEEKAK…VDQLIAKYSS (86 aa)). An acyl-CoA is bound by residues 29–33 (YALYK), Lys-51, and Lys-55. Lys-51 is covalently cross-linked (Glycyl lysine isopeptide (Lys-Gly) (interchain with G-Cter in ubiquitin)). Lys-72 participates in a covalent cross-link: Glycyl lysine isopeptide (Lys-Gly) (interchain with G-Cter in ubiquitin). An acyl-CoA is bound at residue Tyr-74.

The protein belongs to the ACBP family.

In terms of biological role, binds medium- and long-chain acyl-CoA esters with very high affinity and may function as an intracellular carrier of acyl-CoA esters. Enhances the in vitro activity of the ceramide synthase complex. The chain is Acyl-CoA-binding protein (ACB1) from Saccharomyces cerevisiae (strain ATCC 204508 / S288c) (Baker's yeast).